Reading from the N-terminus, the 388-residue chain is Succinate--CoA ligase [ADP-forming] subunit beta (388 aa).

The ATP-grasp domain maps to 9-244 (KAIFRSMGVA…LEEEDPKEIE (236 aa)). ATP contacts are provided by residues K46, 53 to 55 (GRG), E99, C102, and E107. The Mg(2+) site is built by N199 and D213. Substrate is bound by residues N264 and 321–323 (GIM).

It belongs to the succinate/malate CoA ligase beta subunit family. In terms of assembly, heterotetramer of two alpha and two beta subunits. The cofactor is Mg(2+).

It carries out the reaction succinate + ATP + CoA = succinyl-CoA + ADP + phosphate. It catalyses the reaction GTP + succinate + CoA = succinyl-CoA + GDP + phosphate. The protein operates within carbohydrate metabolism; tricarboxylic acid cycle; succinate from succinyl-CoA (ligase route): step 1/1. Functionally, succinyl-CoA synthetase functions in the citric acid cycle (TCA), coupling the hydrolysis of succinyl-CoA to the synthesis of either ATP or GTP and thus represents the only step of substrate-level phosphorylation in the TCA. The beta subunit provides nucleotide specificity of the enzyme and binds the substrate succinate, while the binding sites for coenzyme A and phosphate are found in the alpha subunit. The chain is Succinate--CoA ligase [ADP-forming] subunit beta from Staphylococcus saprophyticus subsp. saprophyticus (strain ATCC 15305 / DSM 20229 / NCIMB 8711 / NCTC 7292 / S-41).